A 610-amino-acid polypeptide reads, in one-letter code: Protein arginine N-methyltransferase 5 (610 aa).

Residues 284–587 (LEIPLQPLCD…VDATKVWYEW (304 aa)) form the SAM-dependent MTase PRMT-type domain. Tyr300 is an S-adenosyl-L-methionine binding site. Position 303 (Phe303) interacts with a protein. S-adenosyl-L-methionine is bound by residues 309–310 (KY), Glu368, and 396–397 (DM). A protein contacts are provided by Glu412 and Glu421. Residues Glu412 and Glu421 each act as proton donor/acceptor in the active site. The segment at 470-610 (AFDYGYVSLL…TRGTGYNMRL (141 aa)) is interaction with vls.

This sequence belongs to the class I-like SAM-binding methyltransferase superfamily. Protein arginine N-methyltransferase family. As to quaternary structure, interacts with vls. As to expression, expressed only in ovaries.

Its subcellular location is the cytoplasm. Its function is as follows. Arginine methyltransferase that can both catalyze the formation of omega-N monomethylarginine (MMA) and symmetrical dimethylarginine (sDMA). Specifically mediates the symmetrical dimethylation of arginine residues in the small nuclear ribonucleoproteins SmD1 and SmD3. Required for arginine symmetrical dimethylation of piwi family proteins, piwi, aub and AGO3, during germline development. Required during oogenesis for pole cell formation in the pathway controlled by oskar (osk) and for abdominal segments during early embryogenesis. Involved in nanos (nos) and germ cell mRNAs localization. In Drosophila melanogaster (Fruit fly), this protein is Protein arginine N-methyltransferase 5.